Here is a 120-residue protein sequence, read N- to C-terminus: Ubiquitin domain-containing protein TINCR (120 aa).

The Ubiquitin-like domain occupies 14-83 (YHIKVHLADE…LQDGSVLLLV (70 aa)).

Detected in stratum corneum (at protein level).

In Homo sapiens (Human), this protein is Ubiquitin domain-containing protein TINCR.